A 317-amino-acid polypeptide reads, in one-letter code: Glutathione synthetase (317 aa).

In terms of domain architecture, ATP-grasp spans 125–311; sequence EKMFATLFPQ…IGGKLMDAID (187 aa). 152–208 contributes to the ATP binding site; that stretch reads TAKHADVILKPLDGMGGTSIFRHRAGDPNLSVILETLTALGTQQIMAQAYLPAIKDG. 2 residues coordinate Mg(2+): E282 and N284.

This sequence belongs to the prokaryotic GSH synthase family. Requires Mg(2+) as cofactor. Mn(2+) serves as cofactor.

The catalysed reaction is gamma-L-glutamyl-L-cysteine + glycine + ATP = glutathione + ADP + phosphate + H(+). The protein operates within sulfur metabolism; glutathione biosynthesis; glutathione from L-cysteine and L-glutamate: step 2/2. The chain is Glutathione synthetase from Pseudomonas putida (strain ATCC 47054 / DSM 6125 / CFBP 8728 / NCIMB 11950 / KT2440).